The sequence spans 333 residues: Probable cytosolic iron-sulfur protein assembly protein ciao1-B (333 aa).

7 WD repeats span residues 14–53 (HPDSRCWYVAWNPKGTLLASCGGDRTIRIWGREGDSWECK), 59–98 (GHQRTVRKVAWSPCGNYLASASFDATTCIWKKKNDDFECL), 103–142 (GHENEVKCVAWAPSGNLLATCSRDKSVWIWEVDEENEYEC), 148–187 (SHTQDVKHVVWHPTQELLASCSYDNNVCVYKEEDDDWECR), 192–231 (GHTSTVWGLTFDPSGQRLASCSDDCTVKIWKECQPEGGQE), 246–285 (FHGRTVYDIAWCPLTGALATACGDDGVRVFKEDETADPDQ), and 297–333 (AHTQDVNCIAWHPKEAGLLVSCSDNGEIAVWNYQSGV).

Belongs to the WD repeat CIA1 family. In terms of assembly, component of the CIA complex.

Its function is as follows. Key component of the cytosolic iron-sulfur protein assembly (CIA) complex, a multiprotein complex that mediates the incorporation of iron-sulfur cluster into extramitochondrial Fe/S proteins. The polypeptide is Probable cytosolic iron-sulfur protein assembly protein ciao1-B (ciao1b) (Salmo salar (Atlantic salmon)).